The sequence spans 234 residues: uncharacterized protein (234 aa).

Over residues 1–12 (MGSSSSSSLNNS) the composition is skewed to low complexity. Residues 1–184 (MGSSSSSSLN…TPYLSGANSR (184 aa)) are disordered. Polar residues-rich tracts occupy residues 21-40 (TPES…SILS) and 52-64 (KSTS…NLTP). Residues 66–77 (KSRWSFSSSKKS) are compositionally biased toward low complexity. Residues 105-120 (GDFTPSLGNTPKSSFS) show a composition bias toward polar residues. A compositionally biased stretch (basic and acidic residues) spans 152–167 (LGELFRDSIREEREES).

As to quaternary structure, interacts with RLK902. Expressed in stems, rosette leaves and roots and weakly in inflorescences.

This is an uncharacterized protein from Arabidopsis thaliana (Mouse-ear cress).